The primary structure comprises 311 residues: Ribose-phosphate pyrophosphokinase (311 aa).

ATP contacts are provided by residues Asp34 to Glu36 and Arg93 to Gln94. Mg(2+)-binding residues include His127 and Asp168. Lys191 is an active-site residue. D-ribose 5-phosphate is bound by residues Arg193, Asp217, and Asp221–Thr225.

Belongs to the ribose-phosphate pyrophosphokinase family. Class I subfamily. As to quaternary structure, homohexamer. The cofactor is Mg(2+).

Its subcellular location is the cytoplasm. It carries out the reaction D-ribose 5-phosphate + ATP = 5-phospho-alpha-D-ribose 1-diphosphate + AMP + H(+). It participates in metabolic intermediate biosynthesis; 5-phospho-alpha-D-ribose 1-diphosphate biosynthesis; 5-phospho-alpha-D-ribose 1-diphosphate from D-ribose 5-phosphate (route I): step 1/1. In terms of biological role, involved in the biosynthesis of the central metabolite phospho-alpha-D-ribosyl-1-pyrophosphate (PRPP) via the transfer of pyrophosphoryl group from ATP to 1-hydroxyl of ribose-5-phosphate (Rib-5-P). The protein is Ribose-phosphate pyrophosphokinase of Mesorhizobium japonicum (strain LMG 29417 / CECT 9101 / MAFF 303099) (Mesorhizobium loti (strain MAFF 303099)).